Reading from the N-terminus, the 685-residue chain is Glycine--tRNA ligase beta subunit (685 aa).

This sequence belongs to the class-II aminoacyl-tRNA synthetase family. As to quaternary structure, tetramer of two alpha and two beta subunits.

The protein resides in the cytoplasm. It catalyses the reaction tRNA(Gly) + glycine + ATP = glycyl-tRNA(Gly) + AMP + diphosphate. The sequence is that of Glycine--tRNA ligase beta subunit from Azotobacter vinelandii (strain DJ / ATCC BAA-1303).